A 652-amino-acid polypeptide reads, in one-letter code: Maternal embryonic leucine zipper kinase (652 aa).

In terms of domain architecture, Protein kinase spans 13 to 265; the sequence is YELHETIGTG…VKHLLSHPWL (253 aa). ATP contacts are provided by residues 19–27 and Lys-42; that span reads IGTGGFAKV. Asp-134 acts as the Proton acceptor in catalysis. Thr-169 is subject to Phosphothreonine; by autocatalysis. Ser-173 is subject to Phosphoserine; by autocatalysis. The interval 284-323 is UBA-like; that stretch reads VDEDCVTELSVFYKCSRTSTSRLISEWNYDHITASYLLLH. The segment at 328 to 652 is autoinhibitory region; it reads HGKPVRLKRP…VEDILSSCKV (325 aa). Thr-415, Thr-450, Thr-452, Thr-482, and Thr-484 each carry phosphothreonine. The disordered stretch occupies residues 443–492; it reads FLHPAPWTPTPRRKQNEKKGILTTPNKNSHTKEKNQSKETPTKKPITTGE. Basic and acidic residues predominate over residues 472 to 484; sequence HTKEKNQSKETPT. 3 positions are modified to phosphoserine: Ser-499, Ser-506, and Ser-518. A KA1 domain is found at 603–652; it reads SDFGKVTMQFELEVCQLSKSEMVGIRRQRLKGDAWVYKRLVEDILSSCKV.

Belongs to the protein kinase superfamily. CAMK Ser/Thr protein kinase family. SNF1 subfamily. Autophosphorylated: autophosphorylation of the T-loop at Thr-169 and Ser-173 is required for activation. Phosphorylated by the maturation promoting factor (MPF), composed of cdk1 and a cyclin-B. Also phosphorylated by some MAPK. Phosphorylated during oocyte maturation. Dephosphorylation destabilizes the protein. Post-translationally, degraded when cells exit mitosis.

It localises to the cell membrane. The catalysed reaction is L-seryl-[protein] + ATP = O-phospho-L-seryl-[protein] + ADP + H(+). It catalyses the reaction L-threonyl-[protein] + ATP = O-phospho-L-threonyl-[protein] + ADP + H(+). Activated by autophosphorylation of the T-loop at Thr-169 and Ser-173: in contrast to other members of the SNF1 subfamily, phosphorylation at Thr-169 is not mediated by STK11/LKB1 but via autophosphorylation instead. Functionally, serine/threonine-protein kinase involved in various processes such as cell cycle regulation, self-renewal of stem cells, apoptosis and splicing regulation. Also plays a role in primitive hematopoiesis, possibly by affecting the expression of genes critical for hematopoiesis. Plays a role in cytokinesis during early development. The protein is Maternal embryonic leucine zipper kinase (melk) of Xenopus tropicalis (Western clawed frog).